Consider the following 562-residue polypeptide: Non-homologous end joining factor IFFO1 (562 aa).

The interval 65-116 (ALRNDLGSNINVLKTLNLRFRCFLAKVHELERRNRLLEKQLQQALEEGKQGR) is LMNA binding. Residues 73-529 (NINVLKTLNL…RLITQSGDRK (457 aa)) form the IF rod domain. A coiled-coil region spans residues 85 to 117 (RCFLAKVHELERRNRLLEKQLQQALEEGKQGRR). A disordered region spans residues 154–187 (RVLGSPSRSPAGPLASSAACHTSSSTSTSTAFSS). Positions 168 to 187 (ASSAACHTSSSTSTSTAFSS) are enriched in low complexity. Residues 237–301 (EIRALYNVLA…MKVEQLKAEL (65 aa)) are a coiled coil. Residues 364 to 401 (MGGRKRERKAAVEEDTSLSESDGPRQPEGAEEESTALS) form a disordered region. Residues 453 to 528 (EQEDSLEKVI…RRLITQSGDR (76 aa)) are XCCR4 binding. Required for localization to the double-strand breaks (DSBs). A coiled-coil region spans residues 458–504 (LEKVIKDTESLFKTREKEYQETIDQIELELATAKNDMNRHLHEYMEM). Residues 523–562 (TQSGDRKSPAFTAVPLSDPPPPPSETEDSDRDVSSDSSMR) form a disordered region. Residues 553–562 (RDVSSDSSMR) show a composition bias toward basic and acidic residues.

Belongs to the intermediate filament family. In terms of assembly, forms a heterotetramer with XRCC4. The interaction with XRCC4 is direct, involves LIG4-free XRCC4 and leads to relocalization of IFFO1 at the double-strand break (DSB) sites. Interacts with LMNA; the interaction forms an interior nucleoskeleton and the recruitment to DNA double-strand breaks.

The protein localises to the nucleus. It localises to the nucleoplasm. It is found in the nucleus inner membrane. Its subcellular location is the nucleus matrix. Its function is as follows. Nuclear matrix protein involved in the immobilization of broken DNA ends and the suppression of chromosome translocation during DNA double-strand breaks (DSBs). Interacts with the nuclear lamina component LMNA, resulting in the formation of a nucleoskeleton that will relocalize to the DSB sites in a XRCC4-dependent manner and promote the immobilization of the broken ends, thereby preventing chromosome translocation. Acts as a scaffold that allows the DNA repair protein XRCC4 and LMNA to assemble into a complex at the DSB sites. The protein is Non-homologous end joining factor IFFO1 of Mus musculus (Mouse).